The primary structure comprises 128 residues: Large ribosomal subunit protein bL12 (128 aa).

Belongs to the bacterial ribosomal protein bL12 family. As to quaternary structure, homodimer. Part of the ribosomal stalk of the 50S ribosomal subunit. Forms a multimeric L10(L12)X complex, where L10 forms an elongated spine to which 2 to 4 L12 dimers bind in a sequential fashion. Binds GTP-bound translation factors.

Forms part of the ribosomal stalk which helps the ribosome interact with GTP-bound translation factors. Is thus essential for accurate translation. The polypeptide is Large ribosomal subunit protein bL12 (Thermotoga petrophila (strain ATCC BAA-488 / DSM 13995 / JCM 10881 / RKU-1)).